The sequence spans 92 residues: PqqA binding protein (92 aa).

Belongs to the PqqD family. In terms of assembly, monomer. Interacts with PqqE.

It participates in cofactor biosynthesis; pyrroloquinoline quinone biosynthesis. In terms of biological role, functions as a PqqA binding protein and presents PqqA to PqqE, in the pyrroloquinoline quinone (PQQ) biosynthetic pathway. The sequence is that of PqqA binding protein from Xanthomonas oryzae pv. oryzae (strain PXO99A).